The chain runs to 1100 residues: Exportin-T (1100 aa).

It belongs to the exportin family. In terms of assembly, interacts with CEX1, GSP1, GSP2, NSP1, NUP2 and UTP8.

The protein resides in the nucleus. Its subcellular location is the cytoplasm. Functionally, tRNA nucleus export receptor which facilitates tRNA translocation across the nuclear pore complex. Preferentially interacts with tRNAs with mature 5'- and 3'-termini and does not distinguish between intron-containing and spliced tRNAs. In the nucleus binds to tRNA and to the Ran-GTPases GSP1 or GSP2 in their active GTP-bound form. Docking of this trimeric complex to the nuclear pore complex (NPC) is mediated through binding to nucleoporins. Upon transit of a nuclear export complex into the cytoplasm, disassembling of the complex and hydrolysis of Ran-GTP to Ran-GDP cause release of the tRNA from the export receptor. The directionality of nuclear export is thought to be conferred by an asymmetric distribution of the GTP- and GDP-bound forms of Ran between the cytoplasm and nucleus. In Saccharomyces cerevisiae (strain ATCC 204508 / S288c) (Baker's yeast), this protein is Exportin-T (LOS1).